The chain runs to 383 residues: Acetylornithine deacetylase (383 aa).

Position 80 (H80) interacts with Zn(2+). D82 is an active-site residue. D112 is a binding site for Zn(2+). Residue E144 is part of the active site. Zn(2+) contacts are provided by E145, E169, and H355.

The protein belongs to the peptidase M20A family. ArgE subfamily. As to quaternary structure, homodimer. Zn(2+) serves as cofactor. It depends on Co(2+) as a cofactor. Requires glutathione as cofactor.

It localises to the cytoplasm. It catalyses the reaction N(2)-acetyl-L-ornithine + H2O = L-ornithine + acetate. The protein operates within amino-acid biosynthesis; L-arginine biosynthesis; L-ornithine from N(2)-acetyl-L-ornithine (linear): step 1/1. Functionally, catalyzes the hydrolysis of the amide bond of N(2)-acetylated L-amino acids. Cleaves the acetyl group from N-acetyl-L-ornithine to form L-ornithine, an intermediate in L-arginine biosynthesis pathway, and a branchpoint in the synthesis of polyamines. The sequence is that of Acetylornithine deacetylase from Escherichia coli O127:H6 (strain E2348/69 / EPEC).